The primary structure comprises 822 residues: Serine/threonine-protein kinase kin-29 (822 aa).

Residues 16–267 enclose the Protein kinase domain; sequence YDVGRAIGKG…IQNVLQHRWM (252 aa). Residues 22–30 and Lys-45 each bind ATP; that span reads IGKGNFATV. Catalysis depends on Asp-138, which acts as the Proton acceptor. Disordered regions lie at residues 348–367, 389–423, and 577–602; these read EGTG…LSGK, LSSP…RQFG, and NPIP…WASP. The span at 394–406 shows a compositional bias: acidic residues; it reads CDSDDSSNSDLCD.

This sequence belongs to the protein kinase superfamily. CAMK Ser/Thr protein kinase family. SNF1 subfamily. As to quaternary structure, interacts with tax-6. The cofactor is Mg(2+). In terms of processing, autophosphorylated. Elevated cAMP levels appears to act via PKA to directly or indirectly phosphorylate multiple sites on kin-29 and inhibit function. As to expression, primarily neuronal, with additional expression in body wall muscle and hypodermal cells. Among neuronal cells, expressed in multiple sensory neurons and interneurons in the lateral, anterior, and lumbar ganglia, as well as in motor neurons in the ventral motor cord. Present in the AWB and AWC olfactory neurons.

The protein localises to the cytoplasm. It localises to the nucleus. It carries out the reaction L-seryl-[protein] + ATP = O-phospho-L-seryl-[protein] + ADP + H(+). The enzyme catalyses L-threonyl-[protein] + ATP = O-phospho-L-threonyl-[protein] + ADP + H(+). In terms of biological role, regulates chemoreceptor expression by phosphorylating the hda-4 class II histone deacetylase (HDAC) and inhibiting the gene repression functions of hda-4 and the mef-2 transcription factor, enabling the correct sensing and transduction of food signals. Role in determining body size, the dauer decision and serotonin-mediated egg laying. May modulate the Sma/Mab pathway and regulates development in the later larval stages. The sequence is that of Serine/threonine-protein kinase kin-29 from Caenorhabditis elegans.